The primary structure comprises 119 residues: Large ribosomal subunit protein uL18 (119 aa).

A disordered region spans residues 1 to 25 (MITKIDKNKVRKKRHARVRSKISGT). The segment covering 9–20 (KVRKKRHARVRS) has biased composition (basic residues).

It belongs to the universal ribosomal protein uL18 family. Part of the 50S ribosomal subunit; part of the 5S rRNA/L5/L18/L25 subcomplex. Contacts the 5S and 23S rRNAs.

Its function is as follows. This is one of the proteins that bind and probably mediate the attachment of the 5S RNA into the large ribosomal subunit, where it forms part of the central protuberance. The polypeptide is Large ribosomal subunit protein uL18 (Listeria monocytogenes serotype 4b (strain CLIP80459)).